The chain runs to 287 residues: Bifunctional protein FolD (287 aa).

NADP(+)-binding positions include 160-162, serine 189, and threonine 230; that span reads GRS.

This sequence belongs to the tetrahydrofolate dehydrogenase/cyclohydrolase family. In terms of assembly, homodimer.

It carries out the reaction (6R)-5,10-methylene-5,6,7,8-tetrahydrofolate + NADP(+) = (6R)-5,10-methenyltetrahydrofolate + NADPH. The catalysed reaction is (6R)-5,10-methenyltetrahydrofolate + H2O = (6R)-10-formyltetrahydrofolate + H(+). It functions in the pathway one-carbon metabolism; tetrahydrofolate interconversion. In terms of biological role, catalyzes the oxidation of 5,10-methylenetetrahydrofolate to 5,10-methenyltetrahydrofolate and then the hydrolysis of 5,10-methenyltetrahydrofolate to 10-formyltetrahydrofolate. The polypeptide is Bifunctional protein FolD (Chlamydia caviae (strain ATCC VR-813 / DSM 19441 / 03DC25 / GPIC) (Chlamydophila caviae)).